A 487-amino-acid polypeptide reads, in one-letter code: GTPase Der (487 aa).

EngA-type G domains are found at residues 2-164 and 203-374; these read KTIA…SLAK and IAVG…QRFA. Residues 8–15, 55–59, 116–119, 209–216, 256–260, and 320–323 contribute to the GTP site; these read GKPNVGKS, DTGGI, NKVD, GRVNVGKS, DTAGI, and NKWD. The KH-like domain occupies 375 to 459; sequence YRIPTSALND…PILLSVKGKN (85 aa). The span at 459–480 shows a compositional bias: basic and acidic residues; the sequence is NAKDEENTSAKKESPSKVSHRE. The interval 459–487 is disordered; the sequence is NAKDEENTSAKKESPSKVSHRESKNRRFV.

This sequence belongs to the TRAFAC class TrmE-Era-EngA-EngB-Septin-like GTPase superfamily. EngA (Der) GTPase family. In terms of assembly, associates with the 50S ribosomal subunit.

Its function is as follows. GTPase that plays an essential role in the late steps of ribosome biogenesis. This chain is GTPase Der, found in Helicobacter hepaticus (strain ATCC 51449 / 3B1).